Consider the following 124-residue polypeptide: Small ribosomal subunit protein uS12 (124 aa).

The tract at residues 1 to 26 is disordered; sequence MPTISQLVGSERKRLTKKTKSPALKA. The residue at position 89 (aspartate 89) is a 3-methylthioaspartic acid. Residues 104–124 are disordered; that stretch reads TAGVKDRRQSRSKYGAKAPKD.

It belongs to the universal ribosomal protein uS12 family. Part of the 30S ribosomal subunit. Contacts proteins S8 and S17. May interact with IF1 in the 30S initiation complex.

Functionally, with S4 and S5 plays an important role in translational accuracy. Its function is as follows. Interacts with and stabilizes bases of the 16S rRNA that are involved in tRNA selection in the A site and with the mRNA backbone. Located at the interface of the 30S and 50S subunits, it traverses the body of the 30S subunit contacting proteins on the other side and probably holding the rRNA structure together. The combined cluster of proteins S8, S12 and S17 appears to hold together the shoulder and platform of the 30S subunit. In Prochlorococcus marinus (strain MIT 9215), this protein is Small ribosomal subunit protein uS12.